A 185-amino-acid chain; its full sequence is ATP synthase subunit delta (185 aa).

The protein belongs to the ATPase delta chain family. As to quaternary structure, F-type ATPases have 2 components, F(1) - the catalytic core - and F(0) - the membrane proton channel. F(1) has five subunits: alpha(3), beta(3), gamma(1), delta(1), epsilon(1). F(0) has three main subunits: a(1), b(2) and c(10-14). The alpha and beta chains form an alternating ring which encloses part of the gamma chain. F(1) is attached to F(0) by a central stalk formed by the gamma and epsilon chains, while a peripheral stalk is formed by the delta and b chains.

The protein localises to the cell inner membrane. F(1)F(0) ATP synthase produces ATP from ADP in the presence of a proton or sodium gradient. F-type ATPases consist of two structural domains, F(1) containing the extramembraneous catalytic core and F(0) containing the membrane proton channel, linked together by a central stalk and a peripheral stalk. During catalysis, ATP synthesis in the catalytic domain of F(1) is coupled via a rotary mechanism of the central stalk subunits to proton translocation. Its function is as follows. This protein is part of the stalk that links CF(0) to CF(1). It either transmits conformational changes from CF(0) to CF(1) or is implicated in proton conduction. In Coxiella burnetii (strain CbuK_Q154) (Coxiella burnetii (strain Q154)), this protein is ATP synthase subunit delta.